We begin with the raw amino-acid sequence, 319 residues long: Type II methyltransferase M.MpnI (319 aa).

It belongs to the N(4)/N(6)-methyltransferase family.

It carries out the reaction a 2'-deoxyadenosine in DNA + S-adenosyl-L-methionine = an N(6)-methyl-2'-deoxyadenosine in DNA + S-adenosyl-L-homocysteine + H(+). Functionally, a methylase that recognizes the double-stranded sequence 5'-CTAT-3' and methylates A-3 on one strand; probably responsible for all of the methylation on this site in the genome. The sequence is that of Type II methyltransferase M.MpnI from Mycoplasma pneumoniae (strain ATCC 29342 / M129 / Subtype 1) (Mycoplasmoides pneumoniae).